A 562-amino-acid chain; its full sequence is Dihydroxy-acid dehydratase (562 aa).

Asp-80 is a binding site for Mg(2+). Cys-121 lines the [2Fe-2S] cluster pocket. Mg(2+) contacts are provided by Asp-122 and Lys-123. N6-carboxylysine is present on Lys-123. A [2Fe-2S] cluster-binding site is contributed by Cys-194. Glu-446 is a Mg(2+) binding site. Residue Ser-472 is the Proton acceptor of the active site.

Belongs to the IlvD/Edd family. Homodimer. [2Fe-2S] cluster serves as cofactor. The cofactor is Mg(2+).

It carries out the reaction (2R)-2,3-dihydroxy-3-methylbutanoate = 3-methyl-2-oxobutanoate + H2O. It catalyses the reaction (2R,3R)-2,3-dihydroxy-3-methylpentanoate = (S)-3-methyl-2-oxopentanoate + H2O. Its pathway is amino-acid biosynthesis; L-isoleucine biosynthesis; L-isoleucine from 2-oxobutanoate: step 3/4. It participates in amino-acid biosynthesis; L-valine biosynthesis; L-valine from pyruvate: step 3/4. Functionally, functions in the biosynthesis of branched-chain amino acids. Catalyzes the dehydration of (2R,3R)-2,3-dihydroxy-3-methylpentanoate (2,3-dihydroxy-3-methylvalerate) into 2-oxo-3-methylpentanoate (2-oxo-3-methylvalerate) and of (2R)-2,3-dihydroxy-3-methylbutanoate (2,3-dihydroxyisovalerate) into 2-oxo-3-methylbutanoate (2-oxoisovalerate), the penultimate precursor to L-isoleucine and L-valine, respectively. This chain is Dihydroxy-acid dehydratase, found in Staphylococcus aureus (strain USA300 / TCH1516).